The following is a 132-amino-acid chain: Agouti-signaling protein (132 aa).

Positions 1-22 (MDVTRLLLATLLVFLCFFTVYS) are cleaved as a signal peptide. Asn-39 carries N-linked (GlcNAc...) asparagine glycosylation. The interval 61–87 (HISRKEAEKKRSSKKEASMKKVARPRT) is disordered. Residues 64–79 (RKEAEKKRSSKKEASM) show a composition bias toward basic and acidic residues. Disulfide bonds link Cys-93–Cys-108, Cys-100–Cys-114, Cys-107–Cys-125, Cys-111–Cys-132, and Cys-116–Cys-123. The 40-residue stretch at 93-132 (CVATRDSCKPPAPACCDPCASCQCRFFRSACSCRVLSLNC) folds into the Agouti domain.

It localises to the secreted. Functionally, involved in the regulation of melanogenesis. The binding of ASP to MC1R precludes alpha-MSH initiated signaling and thus blocks production of cAMP, leading to a down-regulation of eumelanogenesis (brown/black pigment) and thus increasing synthesis of pheomelanin (yellow/red pigment). The chain is Agouti-signaling protein (ASIP) from Colobus polykomos (Western black-and-white colobus monkey).